The following is a 329-amino-acid chain: uncharacterized protein (329 aa).

A disordered region spans residues 284–303 (SGGGHSEAGGLNAPYDKSKS).

This is an uncharacterized protein from Methanocaldococcus jannaschii (strain ATCC 43067 / DSM 2661 / JAL-1 / JCM 10045 / NBRC 100440) (Methanococcus jannaschii).